The following is a 562-amino-acid chain: tRNA (guanine(37)-N(1))-methyltransferase (562 aa).

The N-terminal 41 residues, 1–41, are a transit peptide targeting the mitochondrion; that stretch reads MLFRRFLNLTTKTPHLQTFRARHYFRNMSCPELIPPPTVRG. S-adenosyl-L-methionine-binding positions include His-243, 281–282, and Asn-340; that span reads DL. Basic and acidic residues predominate over residues 523–534; that stretch reads AHIVAKKPEKKP. Residues 523–562 form a disordered region; sequence AHIVAKKPEKKPLPAKPASKKNKNQANTKQVEAGLDKMQM.

This sequence belongs to the class I-like SAM-binding methyltransferase superfamily. TRM5/TYW2 family. In terms of assembly, monomer.

It localises to the mitochondrion matrix. The protein localises to the nucleus. Its subcellular location is the cytoplasm. The enzyme catalyses guanosine(37) in tRNA + S-adenosyl-L-methionine = N(1)-methylguanosine(37) in tRNA + S-adenosyl-L-homocysteine + H(+). Its function is as follows. Specifically methylates the N1 position of guanosine-37 in various cytoplasmic and mitochondrial tRNAs. Methylation is not dependent on the nature of the nucleoside 5' of the target nucleoside. This is the first step in the biosynthesis of wybutosine (yW), a modified base adjacent to the anticodon of tRNAs and required for accurate decoding. In Aedes aegypti (Yellowfever mosquito), this protein is tRNA (guanine(37)-N(1))-methyltransferase.